The sequence spans 769 residues: RNA-directed RNA polymerase (769 aa).

The RdRp catalytic domain maps to 463–579; it reads PIGIGLDASR…FCEKGDFNRI (117 aa).

The protein belongs to the tombusviridae RNA polymerase family.

It catalyses the reaction RNA(n) + a ribonucleoside 5'-triphosphate = RNA(n+1) + diphosphate. Its function is as follows. Probable polymerase. The chain is RNA-directed RNA polymerase from Dianthus barbatus (Carnation).